A 224-amino-acid chain; its full sequence is Ribonuclease T (224 aa).

The region spanning 32 to 206 is the Exonuclease domain; sequence VVVDVETGGF…YDTEKTAELF (175 aa). Positions 35, 37, 193, and 198 each coordinate Mg(2+). The active-site Proton donor/acceptor is histidine 193.

This sequence belongs to the RNase T family. As to quaternary structure, homodimer. The cofactor is Mg(2+).

Its function is as follows. Trims short 3' overhangs of a variety of RNA species, leaving a one or two nucleotide 3' overhang. Responsible for the end-turnover of tRNA: specifically removes the terminal AMP residue from uncharged tRNA (tRNA-C-C-A). Also appears to be involved in tRNA biosynthesis. This chain is Ribonuclease T, found in Pseudomonas aeruginosa (strain UCBPP-PA14).